A 194-amino-acid polypeptide reads, in one-letter code: Lytic chitin monooxygenase (194 aa).

Residues 1–28 (MKKSLLTIVLAFSFVLGGAALAPTVSEA) form the signal peptide. Positions 29 and 114 each coordinate Cu cation. Positions 29 to 191 (HGYVASPGSR…VNAFYQAIDV (163 aa)) constitute a Chitin-binding type-4 domain.

Cu(2+) serves as cofactor.

The protein resides in the secreted. It catalyses the reaction [(1-&gt;4)-N-acetyl-beta-D-glucosaminyl]n+m + reduced acceptor + O2 = [(1-&gt;4)-N-acetyl-beta-D-glucosaminyl]m-1-(1-&gt;4)-2-(acetylamino)-2-deoxy-D-glucono-1,5-lactone + [(1-&gt;4)-N-acetyl-beta-D-glucosaminyl]n + acceptor + H2O.. It functions in the pathway glycan degradation; chitin degradation. Its function is as follows. Involved in chitin degradation. Catalyzes the oxidative cleavage of glycosidic bonds in both alpha- and beta-chitin via a copper-dependent mechanism, leading to oxidized chitooligosaccharides with a dominance of even-numbered products. Acts synergistically with the chitinase EfChi18A, and combining the two enzymes leads to rapid and complete depolymerization of crystalline chitin, especially with beta-chitin as a substrate. Is likely involved in a chitin degradation pathway that allows E.faecalis V583 to grow on chitin as a carbon source. This chain is Lytic chitin monooxygenase, found in Enterococcus faecalis (strain ATCC 700802 / V583).